We begin with the raw amino-acid sequence, 267 residues long: Phosphate import ATP-binding protein PstB (267 aa).

Residues 21–262 (VAARNLDFYY…PSKQQTEDYI (242 aa)) form the ABC transporter domain. Residue 53–60 (GPSGCGKS) participates in ATP binding.

Belongs to the ABC transporter superfamily. Phosphate importer (TC 3.A.1.7) family. In terms of assembly, the complex is composed of two ATP-binding proteins (PstB), two transmembrane proteins (PstC and PstA) and a solute-binding protein (PstS).

The protein localises to the cell inner membrane. The catalysed reaction is phosphate(out) + ATP + H2O = ADP + 2 phosphate(in) + H(+). Part of the ABC transporter complex PstSACB involved in phosphate import. Responsible for energy coupling to the transport system. This Xanthomonas campestris pv. campestris (strain 8004) protein is Phosphate import ATP-binding protein PstB.